Consider the following 900-residue polypeptide: Nuclear factor NF-kappa-B p100 subunit (900 aa).

2 positions are modified to phosphoserine: serine 23 and serine 161. Residues 38–343 (PYLVIVEQPK…EVQRKRRKAL (306 aa)) form the RHD domain. The Nuclear localization signal motif lies at 337–341 (RKRRK). Residues 346-377 (FSQPFGGGSHMGGGSGGAAGGYGGAGGGGSLG) form a GRR region. The segment at 404-435 (GAQMAATVPSRDSGEEAAEPSAPSRTPQCEPQ) is disordered. At threonine 429 the chain carries Phosphothreonine. ANK repeat units follow at residues 487-519 (NGDTPLHLAIIHGQTSVIEQIVYVIHHAQDLGV), 526-555 (LHQTPLHLAVITGQTSVVSFLLRVGADPAL), 559-591 (HGDSAMHLALRAGAGAPELLRALLQSGAPAVPQ), 599-628 (EGLYPVHLAVRARSPECLDLLVDSGAEVEA), 633-663 (GGRTALHLATEMEELGLVTHLVTKLRANVNA), and 667-696 (AGNTPLHLAAGLGYPTLTRLLLKAGADIHA). The disordered stretch occupies residues 698–734 (NEEPLCPLPSPPTSDSDSDSEGPEKDTRSSFRGHTPL). Residues serine 713, serine 715, and serine 717 each carry the phosphoserine modification. The stretch at 729–758 (RGHTPLDLTCSTKVKTLLLNAAQNTMEPPL) is one ANK 7 repeat. In terms of domain architecture, Death spans 764–851 (AGPGLSLGDT…EGVRLLRGPE (88 aa)). Serine 812 is subject to Phosphoserine. Residues 849-866 (GPETRDKLPSTAEVKEDS) are compositionally biased toward basic and acidic residues. Residues 849–900 (GPETRDKLPSTAEVKEDSAYGSQSVEQEAEKLGPPPEPPGGLCHGHPQPQVH) are disordered. A Glycyl lysine isopeptide (Lys-Gly) (interchain with G-Cter in ubiquitin) cross-link involves residue lysine 855. Serine 866 and serine 870 each carry phosphoserine; by MAP3K14. Low complexity predominate over residues 888 to 900 (GGLCHGHPQPQVH).

Component of the NF-kappa-B RelB-p52 complex. Homodimer; component of the NF-kappa-B p52-p52 complex. Component of the NF-kappa-B p65-p52 complex. Component of the NF-kappa-B p52-c-Rel complex. NFKB2/p52 interacts with NFKBIE. Component of a complex consisting of the NF-kappa-B p50-p50 homodimer and BCL3. Directly interacts with MEN1. Post-translationally, while translation occurs, the particular unfolded structure after the GRR repeat promotes the generation of p52 making it an acceptable substrate for the proteasome. This process is known as cotranslational processing. The processed form is active and the unprocessed form acts as an inhibitor (I kappa B-like), being able to form cytosolic complexes with NF-kappa B, trapping it in the cytoplasm. Complete folding of the region downstream of the GRR repeat precludes processing. In terms of processing, subsequent to MAP3K14-dependent serine phosphorylation, p100 polyubiquitination occurs then triggering its proteasome-dependent processing. Constitutive processing is tightly suppressed by its C-terminal processing inhibitory domain, named PID, which contains the death domain. Post-translationally, ubiquitinated by TRIM55; leading to processing by VCP and subsequent ubiquitin-dependent protein degradation by the proteasome.

The protein resides in the nucleus. It is found in the cytoplasm. In terms of biological role, NF-kappa-B is a pleiotropic transcription factor present in almost all cell types and is the endpoint of a series of signal transduction events that are initiated by a vast array of stimuli related to many biological processes such as inflammation, immunity, differentiation, cell growth, tumorigenesis and apoptosis. NF-kappa-B is a homo- or heterodimeric complex formed by the Rel-like domain-containing proteins RELA/p65, RELB, NFKB1/p105, NFKB1/p50, REL and NFKB2/p52. The dimers bind at kappa-B sites in the DNA of their target genes and the individual dimers have distinct preferences for different kappa-B sites that they can bind with distinguishable affinity and specificity. Different dimer combinations act as transcriptional activators or repressors, respectively. NF-kappa-B is controlled by various mechanisms of post-translational modification and subcellular compartmentalization as well as by interactions with other cofactors or corepressors. NF-kappa-B complexes are held in the cytoplasm in an inactive state complexed with members of the NF-kappa-B inhibitor (I-kappa-B) family. In a conventional activation pathway, I-kappa-B is phosphorylated by I-kappa-B kinases (IKKs) in response to different activators, subsequently degraded thus liberating the active NF-kappa-B complex which translocates to the nucleus. In a non-canonical activation pathway, the MAP3K14-activated CHUK/IKKA homodimer phosphorylates NFKB2/p100 associated with RelB, inducing its proteolytic processing to NFKB2/p52 and the formation of NF-kappa-B RelB-p52 complexes. The NF-kappa-B heterodimeric RelB-p52 complex is a transcriptional activator. The NF-kappa-B p52-p52 homodimer is a transcriptional repressor. NFKB2 appears to have dual functions such as cytoplasmic retention of attached NF-kappa-B proteins by p100 and generation of p52 by a cotranslational processing. The proteasome-mediated process ensures the production of both p52 and p100 and preserves their independent function. p52 binds to the kappa-B consensus sequence 5'-GGRNNYYCC-3', located in the enhancer region of genes involved in immune response and acute phase reactions. p52 and p100 are respectively the minor and major form; the processing of p100 being relatively poor. Isoform p49 is a subunit of the NF-kappa-B protein complex, which stimulates the HIV enhancer in synergy with p65. In concert with RELB, regulates the circadian clock by repressing the transcriptional activator activity of the CLOCK-BMAL1 heterodimer. The chain is Nuclear factor NF-kappa-B p100 subunit (NFKB2) from Homo sapiens (Human).